The chain runs to 178 residues: ATP-dependent protease subunit HslV (178 aa).

The active site involves threonine 7. Positions 162, 165, and 168 each coordinate Na(+).

It belongs to the peptidase T1B family. HslV subfamily. A double ring-shaped homohexamer of HslV is capped on each side by a ring-shaped HslU homohexamer. The assembly of the HslU/HslV complex is dependent on binding of ATP.

It is found in the cytoplasm. It carries out the reaction ATP-dependent cleavage of peptide bonds with broad specificity.. Allosterically activated by HslU binding. In terms of biological role, protease subunit of a proteasome-like degradation complex believed to be a general protein degrading machinery. The polypeptide is ATP-dependent protease subunit HslV (Janthinobacterium sp. (strain Marseille) (Minibacterium massiliensis)).